A 62-amino-acid chain; its full sequence is Alpha-conotoxin-like S1.1 (62 aa).

An N-terminal signal peptide occupies residues 1 to 21 (MGMRMMFTVFLLVVLAITVVS). Residues 22 to 48 (FPLDRESDGANAEARTHDHEKHALDRN) constitute a propeptide that is removed on maturation. Disulfide bonds link C50–C56 and C51–C61. Residue C61 is modified to Cysteine amide.

Belongs to the conotoxin A superfamily. As to expression, expressed by the venom duct.

The protein localises to the secreted. In terms of biological role, alpha-conotoxins act on postsynaptic membranes, they bind to the nicotinic acetylcholine receptors (nAChR) and thus inhibit them. This is Alpha-conotoxin-like S1.1 from Conus striatus (Striated cone).